The chain runs to 200 residues: Putative protein ATXN8OS (200 aa).

A disordered region spans residues 19–39 (PFSGLKEEEEEDGEDDEEEEE). Over residues 25-39 (EEEEEDGEDDEEEEE) the composition is skewed to acidic residues.

In terms of tissue distribution, expressed in brain. Expressed in muscle tissues (at protein level).

It localises to the cytoplasm. This is Putative protein ATXN8OS from Homo sapiens (Human).